The primary structure comprises 250 residues: Triosephosphate isomerase (250 aa).

Residue 8 to 10 participates in substrate binding; that stretch reads NWK. His-93 serves as the catalytic Electrophile. Glu-165 (proton acceptor) is an active-site residue. Substrate is bound by residues Gly-171 and Ser-211.

It belongs to the triosephosphate isomerase family. As to quaternary structure, homodimer.

Its subcellular location is the cytoplasm. The catalysed reaction is D-glyceraldehyde 3-phosphate = dihydroxyacetone phosphate. It participates in carbohydrate biosynthesis; gluconeogenesis. The protein operates within carbohydrate degradation; glycolysis; D-glyceraldehyde 3-phosphate from glycerone phosphate: step 1/1. Its function is as follows. Involved in the gluconeogenesis. Catalyzes stereospecifically the conversion of dihydroxyacetone phosphate (DHAP) to D-glyceraldehyde-3-phosphate (G3P). This Malacoplasma penetrans (strain HF-2) (Mycoplasma penetrans) protein is Triosephosphate isomerase.